Consider the following 548-residue polypeptide: Myrosinase (548 aa).

An N-terminal signal peptide occupies residues Met1 to Ala20. Disulfide bonds link Cys26–Cys458, Cys34–Cys454, and Cys226–Cys236. Gln59 contributes to the substrate binding site. 2 residues coordinate Zn(2+): His76 and Asp90. Asn110 carries an N-linked (GlcNAc...) asparagine glycan. 2 residues coordinate substrate: His161 and Asn206. Gln207 is a binding site for L-ascorbate. Residue Asn240 is glycosylated (N-linked (GlcNAc...) asparagine). Residue Arg281 participates in L-ascorbate binding. A glycan (N-linked (GlcNAc...) asparagine) is linked at Asn331. Position 352 (Tyr352) interacts with substrate. Residue Glu429 is the Nucleophile of the active site. Substrate-binding positions include Trp477 and Glu484 to Phe485. A glycan (N-linked (GlcNAc...) asparagine) is linked at Asn520.

It belongs to the glycosyl hydrolase 1 family. As to quaternary structure, homodimer. In terms of tissue distribution, in vacuoles called myrosin grains of a certain class of cells, myrosin cells, distributed in the cotyledons and the axis of the embryo as well as in different organs of the growing plant.

It is found in the vacuole. It catalyses the reaction a thioglucoside + H2O = a sugar + a thiol.. Its function is as follows. Degradation of glucosinolates (glucose residue linked by a thioglucoside bound to an amino acid derivative) to glucose, sulfate and any of the products: thiocyanates, isothiocyanates, nitriles, epithionitriles or oxazolidine-2-thiones. The polypeptide is Myrosinase (Brassica napus (Rape)).